The sequence spans 219 residues: Uracil-DNA glycosylase (219 aa).

Catalysis depends on aspartate 62, which acts as the Proton acceptor.

Belongs to the uracil-DNA glycosylase (UDG) superfamily. UNG family.

It localises to the cytoplasm. It catalyses the reaction Hydrolyzes single-stranded DNA or mismatched double-stranded DNA and polynucleotides, releasing free uracil.. Excises uracil residues from the DNA which can arise as a result of misincorporation of dUMP residues by DNA polymerase or due to deamination of cytosine. In Lactococcus lactis subsp. cremoris (strain MG1363), this protein is Uracil-DNA glycosylase.